The sequence spans 114 residues: Large ribosomal subunit protein bL17 (114 aa).

Belongs to the bacterial ribosomal protein bL17 family. In terms of assembly, part of the 50S ribosomal subunit. Contacts protein L32.

This is Large ribosomal subunit protein bL17 from Elusimicrobium minutum (strain Pei191).